The primary structure comprises 946 residues: Clumping factor A (946 aa).

A signal peptide spans 1 to 39 (MNMKKKEKHAIRKKSIGVASVLVGTLIGFGLLSSKEADA). A YSIRK-G/S signaling motif motif is present at residues 9–20 (HAIRKKSIGVAS). 2 disordered regions span residues 34–199 (SKEA…SNKD) and 528–917 (FNNG…SEDE). The segment at 40–542 (SENSVTQSDS…GSGDGIDKPV (503 aa)) is ligand binding A region. Positions 47 to 65 (SDSASNESKSNDSSSVSAA) are enriched in low complexity. Polar residues predominate over residues 71–111 (TNVSDTKTSSNTNNGETSVAQNPAQQETTQSALTNATTEET). Low complexity-rich tracts occupy residues 117 to 131 (ATTATNQANTPATTQ) and 142 to 161 (NQTSNETTSNDTNTVSSVNS). Positions 162-199 (PQNSTNAENVSTTQDTSTEATPSNNESAPQSTDASNKD) are enriched in polar residues. The span at 546–564 (QPDEPGEIEPIPEDSDSDP) shows a compositional bias: acidic residues. A compositionally biased stretch (low complexity) spans 565–597 (GSDSGSDSNSDSGSDSGSDSTSDSGSDSASDSD). Residues 598–874 (SASDSDSASD…DSDSESDSNS (277 aa)) show a composition bias toward acidic residues. The segment covering 875 to 893 (DSESGSNNNVVPPNSPKNG) has biased composition (low complexity). The span at 900–909 (NEAKDSKEPL) shows a compositional bias: basic and acidic residues. Positions 909–913 (LPDTG) match the LPXTG sorting signal motif. Residue Thr912 is modified to Pentaglycyl murein peptidoglycan amidated threonine. A propeptide spans 913-946 (GSEDEANTSLIWGLLASIGSLLLFRRKKENKDKK) (removed by sortase).

It belongs to the serine-aspartate repeat-containing protein (SDr) family.

It is found in the secreted. It localises to the cell wall. Functionally, cell surface-associated protein implicated in virulence. Promotes bacterial attachment exclusively to the gamma-chain of human fibrinogen. Induces formation of bacterial clumps. The chain is Clumping factor A (clfA) from Staphylococcus aureus (strain MW2).